A 312-amino-acid polypeptide reads, in one-letter code: Methionyl-tRNA formyltransferase (312 aa).

109 to 112 lines the (6S)-5,6,7,8-tetrahydrofolate pocket; sequence SLLP.

This sequence belongs to the Fmt family.

The catalysed reaction is L-methionyl-tRNA(fMet) + (6R)-10-formyltetrahydrofolate = N-formyl-L-methionyl-tRNA(fMet) + (6S)-5,6,7,8-tetrahydrofolate + H(+). Attaches a formyl group to the free amino group of methionyl-tRNA(fMet). The formyl group appears to play a dual role in the initiator identity of N-formylmethionyl-tRNA by promoting its recognition by IF2 and preventing the misappropriation of this tRNA by the elongation apparatus. This chain is Methionyl-tRNA formyltransferase, found in Anaeromyxobacter dehalogenans (strain 2CP-C).